The sequence spans 295 residues: Proline-rich protein 18 (295 aa).

Pro residues predominate over residues 1–13 (MPFPPMPPPPAPA). The segment at 1–133 (MPFPPMPPPP…GAGPCPDSAA (133 aa)) is disordered. Positions 14 to 29 (PGAQAARQLPRRPCAA) are enriched in low complexity. The residue at position 47 (serine 47) is a Phosphoserine. Omega-N-methylarginine is present on arginine 83. Over residues 103–126 (ARTTYAATSAGTGTTAAGTSSGAG) the composition is skewed to low complexity. Position 172 is an asymmetric dimethylarginine (arginine 172). Residues 181 to 192 (ARAAGPRRGGPA) show a composition bias toward low complexity. The tract at residues 181–227 (ARAAGPRRGGPASDPDAPPTAGQGRRAPPPGAQLLHGGLQVPQLSPR) is disordered. Omega-N-methylarginine is present on arginine 188.

This is Proline-rich protein 18 (PRR18) from Homo sapiens (Human).